The primary structure comprises 324 residues: Beta-ketoacyl-[acyl-carrier-protein] synthase III (324 aa).

Residues C112 and H251 contribute to the active site. The ACP-binding stretch occupies residues 252–256 (QANLR). Residue N281 is part of the active site.

Belongs to the thiolase-like superfamily. FabH family. In terms of assembly, homodimer.

Its subcellular location is the cytoplasm. The enzyme catalyses malonyl-[ACP] + acetyl-CoA + H(+) = 3-oxobutanoyl-[ACP] + CO2 + CoA. It functions in the pathway lipid metabolism; fatty acid biosynthesis. Functionally, catalyzes the condensation reaction of fatty acid synthesis by the addition to an acyl acceptor of two carbons from malonyl-ACP. Catalyzes the first condensation reaction which initiates fatty acid synthesis and may therefore play a role in governing the total rate of fatty acid production. Possesses both acetoacetyl-ACP synthase and acetyl transacylase activities. Its substrate specificity determines the biosynthesis of branched-chain and/or straight-chain of fatty acids. The sequence is that of Beta-ketoacyl-[acyl-carrier-protein] synthase III from Clostridium perfringens (strain ATCC 13124 / DSM 756 / JCM 1290 / NCIMB 6125 / NCTC 8237 / Type A).